The primary structure comprises 824 residues: Leucine--tRNA ligase (824 aa).

The short motif at 42–52 (PYPSGHLHMGH) is the 'HIGH' region element. The 'KMSKS' region motif lies at 581–585 (KMSKS). ATP is bound at residue K584.

This sequence belongs to the class-I aminoacyl-tRNA synthetase family.

It is found in the cytoplasm. The enzyme catalyses tRNA(Leu) + L-leucine + ATP = L-leucyl-tRNA(Leu) + AMP + diphosphate. The protein is Leucine--tRNA ligase of Syntrophomonas wolfei subsp. wolfei (strain DSM 2245B / Goettingen).